The following is a 378-amino-acid chain: Spermidine/putrescine import ATP-binding protein PotA (378 aa).

Positions 18 to 248 constitute an ABC transporter domain; it reads VQLAGIRKCF…PKNLFVTGFI (231 aa). 50–57 contributes to the ATP binding site; it reads GPSGCGKT.

Belongs to the ABC transporter superfamily. Spermidine/putrescine importer (TC 3.A.1.11.1) family. In terms of assembly, the complex is composed of two ATP-binding proteins (PotA), two transmembrane proteins (PotB and PotC) and a solute-binding protein (PotD).

It localises to the cell inner membrane. It catalyses the reaction ATP + H2O + polyamine-[polyamine-binding protein]Side 1 = ADP + phosphate + polyamineSide 2 + [polyamine-binding protein]Side 1.. In terms of biological role, part of the ABC transporter complex PotABCD involved in spermidine/putrescine import. Responsible for energy coupling to the transport system. The chain is Spermidine/putrescine import ATP-binding protein PotA from Shigella flexneri serotype 5b (strain 8401).